A 218-amino-acid polypeptide reads, in one-letter code: CD99 antigen-like protein 2 (218 aa).

Positions 1–25 are cleaved as a signal peptide; it reads MVAWRSAFLVCLAFSLATLVQRGSG. Residues 26–136 lie on the Extracellular side of the membrane; that stretch reads DFDDFNLKDA…PGSGMVAETG (111 aa). The interval 72-128 is disordered; that stretch reads LADALDDRNDRDDGRRKPIAGGGGFSDKDLEDIVGGGEYKPDKGKGDGRYGSNDDPG. 2 stretches are compositionally biased toward basic and acidic residues: residues 76–87 and 110–119; these read LDDRNDRDDGRR and YKPDKGKGDG. The O-linked (Xyl...) (chondroitin sulfate) serine glycan is linked to Ser129. Residues 137–157 traverse the membrane as a helical segment; it reads TIAGVASALAMALIGAVSSYI. Residues 158-218 are Cytoplasmic-facing; that stretch reads SYQQKKFCFS…EPPPSEPARI (61 aa).

The protein belongs to the CD99 family. Post-translationally, O-glycosylated.

It localises to the cell membrane. It is found in the cell junction. Its subcellular location is the secreted. In terms of biological role, plays a role in a late step of leukocyte extravasation helping cells to overcome the endothelial basement membrane. Acts at the same site as, but independently of, PECAM1. Homophilic adhesion molecule, but these interactions may not be required for cell aggregation. This Pongo abelii (Sumatran orangutan) protein is CD99 antigen-like protein 2 (CD99L2).